Consider the following 142-residue polypeptide: Hemoglobin subunit alpha-3 (142 aa).

The Globin domain maps to 2-142 (TLTDSDKAAV…VATVLTSKYR (141 aa)). An O2-binding site is contributed by His59. His88 contacts heme b.

It belongs to the globin family. As to quaternary structure, heterotetramer of two alpha chains and two beta chains. Red blood cells.

In terms of biological role, this is a larval (tadpole) alpha-globin. This chain is Hemoglobin subunit alpha-3 (hba3), found in Xenopus laevis (African clawed frog).